The following is a 571-amino-acid chain: Translation initiation factor IF-2 (571 aa).

The 169-residue stretch at 71–239 (RRPPVVVIMG…ILLLAELEDY (169 aa)) folds into the tr-type G domain. The tract at residues 80–87 (GHVDHGKT) is G1. Residue 80-87 (GHVDHGKT) participates in GTP binding. Residues 105–109 (GITQH) form a G2 region. Residues 126-129 (DTPG) are G3. GTP-binding positions include 126–130 (DTPGH) and 180–183 (NKID). The tract at residues 180-183 (NKID) is G4. A G5 region spans residues 216–218 (SAK).

The protein belongs to the TRAFAC class translation factor GTPase superfamily. Classic translation factor GTPase family. IF-2 subfamily.

Its subcellular location is the cytoplasm. Its function is as follows. One of the essential components for the initiation of protein synthesis. Protects formylmethionyl-tRNA from spontaneous hydrolysis and promotes its binding to the 30S ribosomal subunits. Also involved in the hydrolysis of GTP during the formation of the 70S ribosomal complex. This is Translation initiation factor IF-2 from Thermus thermophilus (strain ATCC BAA-163 / DSM 7039 / HB27).